The sequence spans 633 residues: UvrABC system protein C (633 aa).

Residues 21 to 100 form the GIY-YIG domain; it reads TDPGVYKFLD…IKELQPRYNV (80 aa). The region spanning 214 to 249 is the UVR domain; the sequence is QELMDLLKDEMQRQSDAHNFEEAARLRDQVKALKDY.

Belongs to the UvrC family. Interacts with UvrB in an incision complex.

Its subcellular location is the cytoplasm. Functionally, the UvrABC repair system catalyzes the recognition and processing of DNA lesions. UvrC both incises the 5' and 3' sides of the lesion. The N-terminal half is responsible for the 3' incision and the C-terminal half is responsible for the 5' incision. In Salinibacter ruber (strain DSM 13855 / M31), this protein is UvrABC system protein C.